The chain runs to 233 residues: Probable transglycosylase IsaA (233 aa).

Positions 1 to 29 (MKKTIMASSLAVALGVTGYAAGTGHQAHA) are cleaved as a signal peptide.

The protein belongs to the transglycosylase family. IsaA subfamily.

The protein localises to the secreted. In terms of biological role, is able to cleave peptidoglycan. The sequence is that of Probable transglycosylase IsaA (isaA) from Staphylococcus aureus (strain Mu3 / ATCC 700698).